The sequence spans 434 residues: Serine--tRNA ligase (434 aa).

230–232 (TSE) is a binding site for L-serine. Residues 261–263 (RRE) and Val277 contribute to the ATP site. An L-serine-binding site is contributed by Glu284. 348–351 (ELTS) lines the ATP pocket. Residue Thr393 coordinates L-serine.

This sequence belongs to the class-II aminoacyl-tRNA synthetase family. Type-1 seryl-tRNA synthetase subfamily. As to quaternary structure, homodimer. The tRNA molecule binds across the dimer.

Its subcellular location is the cytoplasm. The enzyme catalyses tRNA(Ser) + L-serine + ATP = L-seryl-tRNA(Ser) + AMP + diphosphate + H(+). It carries out the reaction tRNA(Sec) + L-serine + ATP = L-seryl-tRNA(Sec) + AMP + diphosphate + H(+). Its pathway is aminoacyl-tRNA biosynthesis; selenocysteinyl-tRNA(Sec) biosynthesis; L-seryl-tRNA(Sec) from L-serine and tRNA(Sec): step 1/1. Its function is as follows. Catalyzes the attachment of serine to tRNA(Ser). Is also able to aminoacylate tRNA(Sec) with serine, to form the misacylated tRNA L-seryl-tRNA(Sec), which will be further converted into selenocysteinyl-tRNA(Sec). This chain is Serine--tRNA ligase, found in Kocuria rhizophila (strain ATCC 9341 / DSM 348 / NBRC 103217 / DC2201).